Reading from the N-terminus, the 305-residue chain is Dermonecrotic toxin LrSicTox-alphaIA1ii (305 aa).

The first 18 residues, 1 to 18 (MLLYVTLILGCWSAFSES), serve as a signal peptide directing secretion. A propeptide spanning residues 19–26 (AETDVAER) is cleaved from the precursor. The active site involves histidine 37. Residues glutamate 57 and aspartate 59 each contribute to the Mg(2+) site. The active-site Nucleophile is histidine 73. Disulfide bonds link cysteine 77-cysteine 83 and cysteine 79-cysteine 222. A Mg(2+)-binding site is contributed by aspartate 117. A glycan (N-linked (GlcNAc...) asparagine) is linked at asparagine 282.

The protein belongs to the arthropod phospholipase D family. Class II subfamily. Class IIa sub-subfamily. Requires Mg(2+) as cofactor. In terms of tissue distribution, expressed by the venom gland.

The protein localises to the secreted. The catalysed reaction is an N-(acyl)-sphingosylphosphocholine = an N-(acyl)-sphingosyl-1,3-cyclic phosphate + choline. The enzyme catalyses an N-(acyl)-sphingosylphosphoethanolamine = an N-(acyl)-sphingosyl-1,3-cyclic phosphate + ethanolamine. It catalyses the reaction a 1-acyl-sn-glycero-3-phosphocholine = a 1-acyl-sn-glycero-2,3-cyclic phosphate + choline. It carries out the reaction a 1-acyl-sn-glycero-3-phosphoethanolamine = a 1-acyl-sn-glycero-2,3-cyclic phosphate + ethanolamine. Inhibited with low affinity by edelfosine. Its function is as follows. Dermonecrotic toxins cleave the phosphodiester linkage between the phosphate and headgroup of certain phospholipids (sphingolipid and lysolipid substrates), forming an alcohol (often choline) and a cyclic phosphate. This toxin acts on sphingomyelin (SM). It also acts on a broad range of lysophospholipids, like lysophosphatidylinositol (LPI), lysophosphatidylglycerol (LPG), lysophosphatidylethanolamine (LPE), lysobisphosphatidic acid (LBPA), lysophosphatidylserine (LPS) and lysophosphatidylcholines (LPC) of varying chain lengths. The substrate preference is LPI &gt; LPG &gt; LPS &gt; LPC &gt;&gt; LPE, LBPA. Furthermore, the enzyme also act on cyclic phosphatidic acid and lyso-platelet activating factor (LPAF, an alkyl-LPC). The enzyme does not act on sphingosylphosphorylcholine (SPC, also known as lyso-sphingomyelin) and PAF. The toxin may also act on ceramide phosphoethanolamine (CPE). It acts by transphosphatidylation, releasing exclusively cyclic phosphate products as second products. It does not exhibit detectable PLA1/2 activity. It induces dose-dependent hemolysis and dermonecrosis. Also induces increased vascular permeability, edema, inflammatory response, and platelet aggregation. This is Dermonecrotic toxin LrSicTox-alphaIA1ii from Loxosceles reclusa (Brown recluse spider).